Here is a 290-residue protein sequence, read N- to C-terminus: Glycine--tRNA ligase alpha subunit (290 aa).

This sequence belongs to the class-II aminoacyl-tRNA synthetase family. Tetramer of two alpha and two beta subunits.

It localises to the cytoplasm. The catalysed reaction is tRNA(Gly) + glycine + ATP = glycyl-tRNA(Gly) + AMP + diphosphate. This Prochlorococcus marinus (strain NATL1A) protein is Glycine--tRNA ligase alpha subunit.